The primary structure comprises 127 residues: Large ribosomal subunit protein bL17 (127 aa).

This sequence belongs to the bacterial ribosomal protein bL17 family. As to quaternary structure, part of the 50S ribosomal subunit. Contacts protein L32.

The polypeptide is Large ribosomal subunit protein bL17 (Lactobacillus johnsonii (strain CNCM I-12250 / La1 / NCC 533)).